Consider the following 496-residue polypeptide: Aldehyde dehydrogenase (496 aa).

Active-site residues include glutamate 263 and cysteine 296.

The protein belongs to the aldehyde dehydrogenase family.

The protein localises to the cytoplasm. It carries out the reaction an aldehyde + NAD(+) + H2O = a carboxylate + NADH + 2 H(+). The chain is Aldehyde dehydrogenase (CLAH10) from Davidiella tassiana (Mycosphaerella tassiana).